Reading from the N-terminus, the 178-residue chain is MTKKEQALIEQYAKSLVEVASEHHSLDTLQADVLAILETFETTNLDQSLSSLAVPHAEKIKLLTLLKGNNSVYMNNFLNLILQNEREAYLYQMLQAVLNEIAIVSNQYDVTVTSSLPLTEEQKSRVRAVVAKKFAVTAGRLIEKVDPSLIGGFIISVNNKVIDTSIRRQLQAFKMNLK.

The protein belongs to the ATPase delta chain family. As to quaternary structure, F-type ATPases have 2 components, F(1) - the catalytic core - and F(0) - the membrane proton channel. F(1) has five subunits: alpha(3), beta(3), gamma(1), delta(1), epsilon(1). F(0) has three main subunits: a(1), b(2) and c(10-14). The alpha and beta chains form an alternating ring which encloses part of the gamma chain. F(1) is attached to F(0) by a central stalk formed by the gamma and epsilon chains, while a peripheral stalk is formed by the delta and b chains.

The protein localises to the cell membrane. Its function is as follows. F(1)F(0) ATP synthase produces ATP from ADP in the presence of a proton or sodium gradient. F-type ATPases consist of two structural domains, F(1) containing the extramembraneous catalytic core and F(0) containing the membrane proton channel, linked together by a central stalk and a peripheral stalk. During catalysis, ATP synthesis in the catalytic domain of F(1) is coupled via a rotary mechanism of the central stalk subunits to proton translocation. Functionally, this protein is part of the stalk that links CF(0) to CF(1). It either transmits conformational changes from CF(0) to CF(1) or is implicated in proton conduction. This Streptococcus pyogenes serotype M3 (strain SSI-1) protein is ATP synthase subunit delta.